Reading from the N-terminus, the 330-residue chain is tRNA U34 carboxymethyltransferase (330 aa).

Residues lysine 91, tryptophan 105, lysine 110, glycine 130, 152–154 (DPS), 181–182 (IE), methionine 196, tyrosine 200, and arginine 315 contribute to the carboxy-S-adenosyl-L-methionine site.

The protein belongs to the class I-like SAM-binding methyltransferase superfamily. CmoB family. Homotetramer.

The catalysed reaction is carboxy-S-adenosyl-L-methionine + 5-hydroxyuridine(34) in tRNA = 5-carboxymethoxyuridine(34) in tRNA + S-adenosyl-L-homocysteine + H(+). Catalyzes carboxymethyl transfer from carboxy-S-adenosyl-L-methionine (Cx-SAM) to 5-hydroxyuridine (ho5U) to form 5-carboxymethoxyuridine (cmo5U) at position 34 in tRNAs. This chain is tRNA U34 carboxymethyltransferase, found in Shewanella halifaxensis (strain HAW-EB4).